Reading from the N-terminus, the 238-residue chain is Ubiquinone biosynthesis O-methyltransferase (238 aa).

The S-adenosyl-L-methionine site is built by R39, G59, D80, and M124.

This sequence belongs to the methyltransferase superfamily. UbiG/COQ3 family.

The enzyme catalyses a 3-demethylubiquinol + S-adenosyl-L-methionine = a ubiquinol + S-adenosyl-L-homocysteine + H(+). The catalysed reaction is a 3-(all-trans-polyprenyl)benzene-1,2-diol + S-adenosyl-L-methionine = a 2-methoxy-6-(all-trans-polyprenyl)phenol + S-adenosyl-L-homocysteine + H(+). Its pathway is cofactor biosynthesis; ubiquinone biosynthesis. In terms of biological role, O-methyltransferase that catalyzes the 2 O-methylation steps in the ubiquinone biosynthetic pathway. The sequence is that of Ubiquinone biosynthesis O-methyltransferase from Aeromonas salmonicida (strain A449).